Here is a 73-residue protein sequence, read N- to C-terminus: NAD(P)H-quinone oxidoreductase subunit L (73 aa).

2 helical membrane-spanning segments follow: residues 6–26 (SLIGLTYAGLAVLYLLVLPLL) and 44–64 (VLMFFLVLFFFPGMVLLAPFM).

Belongs to the complex I NdhL subunit family. As to quaternary structure, NDH-1 can be composed of about 15 different subunits; different subcomplexes with different compositions have been identified which probably have different functions.

Its subcellular location is the cellular thylakoid membrane. The catalysed reaction is a plastoquinone + NADH + (n+1) H(+)(in) = a plastoquinol + NAD(+) + n H(+)(out). The enzyme catalyses a plastoquinone + NADPH + (n+1) H(+)(in) = a plastoquinol + NADP(+) + n H(+)(out). In terms of biological role, NDH-1 shuttles electrons from an unknown electron donor, via FMN and iron-sulfur (Fe-S) centers, to quinones in the respiratory and/or the photosynthetic chain. The immediate electron acceptor for the enzyme in this species is believed to be plastoquinone. Couples the redox reaction to proton translocation, and thus conserves the redox energy in a proton gradient. Cyanobacterial NDH-1 also plays a role in inorganic carbon-concentration. This chain is NAD(P)H-quinone oxidoreductase subunit L, found in Synechococcus sp. (strain JA-2-3B'a(2-13)) (Cyanobacteria bacterium Yellowstone B-Prime).